The sequence spans 337 residues: Holliday junction branch migration complex subunit RuvB (337 aa).

The tract at residues 4–186 (ADRLIAADNP…FGIVQRLEYY (183 aa)) is large ATPase domain (RuvB-L). ATP-binding positions include isoleucine 25, arginine 26, glycine 67, lysine 70, threonine 71, threonine 72, 133 to 135 (EDY), arginine 176, tyrosine 186, and arginine 223. Threonine 71 lines the Mg(2+) pocket. The tract at residues 187–257 (KVDDLQYIVQ…IADKALNMLD (71 aa)) is small ATPAse domain (RuvB-S). Positions 260-337 (VCGFDYMDRK…LHFGIDRPDK (78 aa)) are head domain (RuvB-H). Residues arginine 315 and arginine 320 each coordinate DNA.

It belongs to the RuvB family. In terms of assembly, homohexamer. Forms an RuvA(8)-RuvB(12)-Holliday junction (HJ) complex. HJ DNA is sandwiched between 2 RuvA tetramers; dsDNA enters through RuvA and exits via RuvB. An RuvB hexamer assembles on each DNA strand where it exits the tetramer. Each RuvB hexamer is contacted by two RuvA subunits (via domain III) on 2 adjacent RuvB subunits; this complex drives branch migration. In the full resolvosome a probable DNA-RuvA(4)-RuvB(12)-RuvC(2) complex forms which resolves the HJ.

Its subcellular location is the cytoplasm. The catalysed reaction is ATP + H2O = ADP + phosphate + H(+). The RuvA-RuvB-RuvC complex processes Holliday junction (HJ) DNA during genetic recombination and DNA repair, while the RuvA-RuvB complex plays an important role in the rescue of blocked DNA replication forks via replication fork reversal (RFR). RuvA specifically binds to HJ cruciform DNA, conferring on it an open structure. The RuvB hexamer acts as an ATP-dependent pump, pulling dsDNA into and through the RuvAB complex. RuvB forms 2 homohexamers on either side of HJ DNA bound by 1 or 2 RuvA tetramers; 4 subunits per hexamer contact DNA at a time. Coordinated motions by a converter formed by DNA-disengaged RuvB subunits stimulates ATP hydrolysis and nucleotide exchange. Immobilization of the converter enables RuvB to convert the ATP-contained energy into a lever motion, pulling 2 nucleotides of DNA out of the RuvA tetramer per ATP hydrolyzed, thus driving DNA branch migration. The RuvB motors rotate together with the DNA substrate, which together with the progressing nucleotide cycle form the mechanistic basis for DNA recombination by continuous HJ branch migration. Branch migration allows RuvC to scan DNA until it finds its consensus sequence, where it cleaves and resolves cruciform DNA. The protein is Holliday junction branch migration complex subunit RuvB of Aliivibrio salmonicida (strain LFI1238) (Vibrio salmonicida (strain LFI1238)).